A 218-amino-acid polypeptide reads, in one-letter code: Eukaryotic translation initiation factor 3 subunit K (218 aa).

Ala2 carries the post-translational modification N-acetylalanine. Position 28 is a phosphothreonine (Thr28). In terms of domain architecture, PCI spans 42 to 204; the sequence is YDLEANLAVL…SIKPKNIVEK (163 aa). Ser217 carries the post-translational modification Phosphoserine.

Component of the eukaryotic translation initiation factor 3 (eIF-3) complex, which is composed of 13 subunits: EIF3A, EIF3B, EIF3C, EIF3D, EIF3E, EIF3F, EIF3G, EIF3H, EIF3I, EIF3J, EIF3K, EIF3L and EIF3M. The eIF-3 complex appears to include 3 stable modules: module A is composed of EIF3A, EIF3B, EIF3G and EIF3I; module B is composed of EIF3F, EIF3H, and EIF3M; and module C is composed of EIF3C, EIF3D, EIF3E, EIF3K and EIF3L. EIF3C of module C binds EIF3B of module A and EIF3H of module B, thereby linking the three modules. EIF3J is a labile subunit that binds to the eIF-3 complex via EIF3B. The eIF-3 complex interacts with RPS6KB1 under conditions of nutrient depletion. Mitogenic stimulation leads to binding and activation of a complex composed of MTOR and RPTOR, leading to phosphorylation and release of RPS6KB1 and binding of EIF4B to eIF-3. Interacts with CCND3, but not with CCND1 and CCND2. Ubiquitous, with the highest levels of expression in brain, testis and kidney.

Its subcellular location is the nucleus. The protein localises to the cytoplasm. Its function is as follows. Component of the eukaryotic translation initiation factor 3 (eIF-3) complex, which is required for several steps in the initiation of protein synthesis. The eIF-3 complex associates with the 40S ribosome and facilitates the recruitment of eIF-1, eIF-1A, eIF-2:GTP:methionyl-tRNAi and eIF-5 to form the 43S pre-initiation complex (43S PIC). The eIF-3 complex stimulates mRNA recruitment to the 43S PIC and scanning of the mRNA for AUG recognition. The eIF-3 complex is also required for disassembly and recycling of post-termination ribosomal complexes and subsequently prevents premature joining of the 40S and 60S ribosomal subunits prior to initiation. The eIF-3 complex specifically targets and initiates translation of a subset of mRNAs involved in cell proliferation, including cell cycling, differentiation and apoptosis, and uses different modes of RNA stem-loop binding to exert either translational activation or repression. This chain is Eukaryotic translation initiation factor 3 subunit K, found in Homo sapiens (Human).